Here is a 931-residue protein sequence, read N- to C-terminus: Netrin receptor UNC5C (931 aa).

A signal peptide spans 1–40; sequence MRKGLRATAARCGLGLGYLLQMLVLPALALLSASGTGSAA. Over 41–380 the chain is Extracellular; the sequence is QDDEFFHELP…APDSDDVALY (340 aa). Positions 62–159 constitute an Ig-like domain; sequence PHFLIEPEEA…AGTTKSRKAY (98 aa). 9 disulfides stabilise this stretch: cysteine 83-cysteine 144, cysteine 95-cysteine 142, cysteine 188-cysteine 239, cysteine 272-cysteine 309, cysteine 276-cysteine 313, cysteine 287-cysteine 299, cysteine 328-cysteine 362, cysteine 332-cysteine 367, and cysteine 340-cysteine 352. The Ig-like C2-type domain maps to 161-256; it reads RIAYLRKTFE…KRKSTTATVI (96 aa). Residue asparagine 236 is glycosylated (N-linked (GlcNAc...) asparagine). 2 consecutive TSP type-1 domains span residues 260–314 and 316–368; these read NGGW…TLCP and DGRW…GLCM. N-linked (GlcNAc...) asparagine glycosylation is present at asparagine 361. A helical transmembrane segment spans residues 381–401; sequence VGIVIAVTVCLAITVVVALFV. Residues 402–931 are Cytoplasmic-facing; that stretch reads YRKNHRDFES…VVSLAAEGQY (530 aa). The required for netrin-mediated axon repulsion of neuronal growth cones stretch occupies residues 402-931; the sequence is YRKNHRDFES…VVSLAAEGQY (530 aa). Serine 502 is modified (phosphoserine). In terms of domain architecture, ZU5 spans 530–673; it reads CTAFGTFNSL…LSTYALVGQS (144 aa). Phosphotyrosine is present on tyrosine 568. Residues 694-712 form an interaction with DCC region; that stretch reads SLEYSIRVYCLDDTQDALK. The Death domain occupies 850–929; it reads QKLCSSLDAP…ETVVSLAAEG (80 aa).

Belongs to the unc-5 family. Interacts with DCC (via cytoplasmic domain). Interacts (tyrosine phosphorylated form) with PTPN11. Interacts (via extracellular domain) with FLRT3 (via extracellular domain). Interacts (via Ig-like C2-type domain) with DSCAM (via extracellular domain). Interacts (via death domain) with DAPK1. Interacts (via cytoplasmic domain) with TUBB3; this interaction is decreased by NTN1/Netrin-1. Phosphorylated on different cytoplasmic tyrosine residues. Phosphorylation of Tyr-568 leads to an interaction with PTPN11 phosphatase, suggesting that its activity is regulated by phosphorylation/dephosphorylation. Tyrosine phosphorylation is netrin-dependent. In terms of processing, proteolytically cleaved by caspases during apoptosis. The cleavage does not take place when the receptor is associated with netrin ligand. Its cleavage by caspases is required to induce apoptosis. As to expression, expressed in cortical and cerebellar neurons, including cells of the external and internal granular layer and of the Purkinje cell layer (at protein level). Mainly expressed in regions of differentiating neurons. Highly expressed in brain and lung. Expressed in the cerebellum and the neurons of the hippocampus, with enrichment in neurons of the CA3 hippocampal pyramidal layer. Weakly expressed in testis, ovary, spleen, thymus and bladder. Expressed at very low level in kidney, intestine and salivary gland.

Its subcellular location is the cell membrane. The protein localises to the cell surface. It localises to the synapse. It is found in the synaptosome. The protein resides in the cell projection. Its subcellular location is the dendrite. The protein localises to the axon. It localises to the growth cone. It is found in the lamellipodium. The protein resides in the filopodium. Functionally, receptor for netrin required for axon guidance. Mediates axon repulsion of neuronal growth cones in the developing nervous system upon ligand binding. NTN1/Netrin-1 binding might cause dissociation of UNC5C from polymerized TUBB3 in microtubules and thereby lead to increased microtubule dynamics and axon repulsion. Axon repulsion in growth cones may also be caused by its association with DCC that may trigger signaling for repulsion. Might also collaborate with DSCAM in NTN1-mediated axon repulsion independently of DCC. Also involved in corticospinal tract axon guidance independently of DCC. Involved in dorsal root ganglion axon projection towards the spinal cord. It also acts as a dependence receptor required for apoptosis induction when not associated with netrin ligand. The chain is Netrin receptor UNC5C (Unc5c) from Mus musculus (Mouse).